A 100-amino-acid chain; its full sequence is MITKEEAQKIAKLARLKFEEDTVEKFFTQLSTIMDMIDILNEIDCKDIEPLTSVCNMNARMREDAVTSSDLSSELLDNVSGNSAQLAKEVKYFITPKVVE.

The protein belongs to the GatC family. Heterotrimer of A, B and C subunits.

The enzyme catalyses L-glutamyl-tRNA(Gln) + L-glutamine + ATP + H2O = L-glutaminyl-tRNA(Gln) + L-glutamate + ADP + phosphate + H(+). It carries out the reaction L-aspartyl-tRNA(Asn) + L-glutamine + ATP + H2O = L-asparaginyl-tRNA(Asn) + L-glutamate + ADP + phosphate + 2 H(+). Allows the formation of correctly charged Asn-tRNA(Asn) or Gln-tRNA(Gln) through the transamidation of misacylated Asp-tRNA(Asn) or Glu-tRNA(Gln) in organisms which lack either or both of asparaginyl-tRNA or glutaminyl-tRNA synthetases. The reaction takes place in the presence of glutamine and ATP through an activated phospho-Asp-tRNA(Asn) or phospho-Glu-tRNA(Gln). The protein is Glutamyl-tRNA(Gln) amidotransferase subunit C of Rickettsia conorii (strain ATCC VR-613 / Malish 7).